Reading from the N-terminus, the 353-residue chain is Cyanuric acid amidohydrolase (353 aa).

Positions 1 to 90 (MSSTALYTVP…NIFVRDERQY (90 aa)) are RU A. Substrate contacts are provided by residues Arg49 and 69-70 (SG). An RU B region spans residues 96–231 (GLVTAVGRTR…CHILVVAESD (136 aa)). Lys145 is an active-site residue. Substrate contacts are provided by residues Arg177 and 214 to 215 (SS). The active-site Nucleophile is the Ser214. The interval 237–353 (LRAAHTAMRD…TANATGEASR (117 aa)) is RU C. Glu275 is a binding site for Mg(2+). Residues Arg302 and 321–322 (SG) each bind substrate. The Mg(2+) site is built by Ala324, Gln327, Gly328, Pro329, and Gly332.

It belongs to the cyclic amide hydrolase (CyAH) family. In terms of assembly, homotetramer.

It catalyses the reaction cyanurate + H2O = 1-carboxybiuret + H(+). It functions in the pathway xenobiotic degradation; atrazine degradation; biuret from cyanurate: step 1/1. Its activity is regulated as follows. Inhibited by barbituric acid. Functionally, responsible for the hydrolysis of cyanuric acid, an intermediate formed during catabolism of s-triazine based compounds in herbicides such as atrazine and polymers such as melamine. Catalyzes the hydrolytic opening of the s-triazine ring of cyanuric acid (2,4,6-trihydroxy-s-triazine) to yield carbon dioxide and carboxybiuret, which spontaneously decarboxylates to biuret. Required for growth on melamine or cyanuric acid as sole nitrogen source. This Rhodococcus sp protein is Cyanuric acid amidohydrolase.